The sequence spans 322 residues: Agmatinase (322 aa).

6 residues coordinate Mn(2+): His136, Asp160, His162, Asp164, Asp243, and Asp245.

It belongs to the arginase family. Agmatinase subfamily. Mn(2+) is required as a cofactor.

The enzyme catalyses agmatine + H2O = urea + putrescine. It functions in the pathway amine and polyamine biosynthesis; putrescine biosynthesis via agmatine pathway; putrescine from agmatine: step 1/1. In terms of biological role, catalyzes the formation of putrescine from agmatine. This Chromobacterium violaceum (strain ATCC 12472 / DSM 30191 / JCM 1249 / CCUG 213 / NBRC 12614 / NCIMB 9131 / NCTC 9757 / MK) protein is Agmatinase.